A 148-amino-acid polypeptide reads, in one-letter code: Transcriptional regulator MraZ (148 aa).

2 SpoVT-AbrB domains span residues 7–56 (KERH…EPDI) and 85–128 (LDVV…APER).

It belongs to the MraZ family. In terms of assembly, forms oligomers.

The protein resides in the cytoplasm. Its subcellular location is the nucleoid. This is Transcriptional regulator MraZ from Chlorobium phaeobacteroides (strain DSM 266 / SMG 266 / 2430).